Here is a 345-residue protein sequence, read N- to C-terminus: N-acetyl-gamma-glutamyl-phosphate reductase (345 aa).

Residue Cys149 is part of the active site.

It belongs to the NAGSA dehydrogenase family. Type 1 subfamily.

The protein localises to the cytoplasm. The catalysed reaction is N-acetyl-L-glutamate 5-semialdehyde + phosphate + NADP(+) = N-acetyl-L-glutamyl 5-phosphate + NADPH + H(+). Its pathway is amino-acid biosynthesis; L-arginine biosynthesis; N(2)-acetyl-L-ornithine from L-glutamate: step 3/4. Catalyzes the NADPH-dependent reduction of N-acetyl-5-glutamyl phosphate to yield N-acetyl-L-glutamate 5-semialdehyde. The polypeptide is N-acetyl-gamma-glutamyl-phosphate reductase (Janthinobacterium sp. (strain Marseille) (Minibacterium massiliensis)).